The chain runs to 181 residues: Protein CRABS CLAW (181 aa).

A C4-type zinc finger spans residues 26-53; the sequence is CSICNTILAVGIPLKRMLDTVTVKCGHC. The disordered stretch occupies residues 80–122; the sequence is GSDYKKGSSSSSSSSTSSDQPPSPSPPFVVKPPEKKQRLPSAY. The segment covering 87–99 has biased composition (low complexity); the sequence is SSSSSSSSTSSDQ. Residues 100-109 are compositionally biased toward pro residues; it reads PPSPSPPFVV.

It belongs to the YABBY family. Restricted to flowers, mostly in carpels and nectaries. Expressed at low levels in sepal primordia (buds), sepal receptacle and developing petal. Not detected in placental tissues, septum, stigma and ovules.

It localises to the nucleus. Functionally, transcription factor required for the initiation of nectary development. Also involved in suppressing early radial growth of the gynoecium, in promoting its later elongation and in fusion of its carpels by regulating both cell division and expansion. Establishes the polar differentiation in the carpels by specifying abaxial cell fate in the ovary wall. Regulates both cell division and expansion. The sequence is that of Protein CRABS CLAW from Arabidopsis thaliana (Mouse-ear cress).